A 64-amino-acid chain; its full sequence is DNA gyrase inhibitor YacG (64 aa).

Residues Cys-7, Cys-10, Cys-26, and Cys-30 each contribute to the Zn(2+) site. Positions 43–64 are disordered; the sequence is KRIPGPINPDLLPYPDEGEQWQ.

It belongs to the DNA gyrase inhibitor YacG family. In terms of assembly, interacts with GyrB. It depends on Zn(2+) as a cofactor.

Its function is as follows. Inhibits all the catalytic activities of DNA gyrase by preventing its interaction with DNA. Acts by binding directly to the C-terminal domain of GyrB, which probably disrupts DNA binding by the gyrase. The chain is DNA gyrase inhibitor YacG from Aeromonas salmonicida (strain A449).